The chain runs to 99 residues: uncharacterized protein (99 aa).

The tract at residues 1–99 (MSDFPPSYQQ…KYHSKSDVGF (99 aa)) is disordered. The segment covering 19–29 (QESSTSNNASE) has biased composition (polar residues).

This is an uncharacterized protein from Schizosaccharomyces pombe (strain 972 / ATCC 24843) (Fission yeast).